Consider the following 69-residue polypeptide: MRTLIREHRKELGLTQEELAERVGVTRQTIIALEKGRYSPSLILAHRIARALGREHIEDIFILDEDGAK.

The 56-residue stretch at 5-60 (IREHRKELGLTQEELAERVGVTRQTIIALEKGRYSPSLILAHRIARALGREHIEDI) folds into the HTH cro/C1-type domain. The segment at residues 16 to 35 (QEELAERVGVTRQTIIALEK) is a DNA-binding region (H-T-H motif).

This is an uncharacterized protein from Methanothermobacter thermautotrophicus (strain ATCC 29096 / DSM 1053 / JCM 10044 / NBRC 100330 / Delta H) (Methanobacterium thermoautotrophicum).